We begin with the raw amino-acid sequence, 270 residues long: MAENKRVISIENRIPELKKYRKKKLVRHLAILIGIFVILIAITLYFLSPLSKLDKIAVSGNKQLTENEVRKESGLEIGEFVIGISNGKTEDALKKNTLIKDATVSKEGLNDVQINITEFKTIGYQQQDGKYYDVLESGIMLTDQPRQFPIGNDLLFQNFKNGKTLEKMVDQINKLPKDVVSSISEVIYSPTKSDKNHIKLYMNDGNQVSADISTFAEKMQHYPAIVAQLAKGQKGVIDIEVGSYFQSYYQQNAEKKATEEAAKEKKETNE.

The Cytoplasmic segment spans residues 1–28; it reads MAENKRVISIENRIPELKKYRKKKLVRH. A helical transmembrane segment spans residues 29–49; it reads LAILIGIFVILIAITLYFLSP. Over 50 to 270 the chain is Extracellular; that stretch reads LSKLDKIAVS…AAKEKKETNE (221 aa). The region spanning 51–119 is the POTRA domain; the sequence is SKLDKIAVSG…NDVQINITEF (69 aa).

Belongs to the FtsQ/DivIB family. DivIB subfamily.

The protein resides in the cell membrane. Cell division protein that may be involved in stabilizing or promoting the assembly of the division complex. This Listeria monocytogenes serovar 1/2a (strain ATCC BAA-679 / EGD-e) protein is Cell division protein DivIB.